The chain runs to 620 residues: MIKKIISVFLLLACIITLAFTAFFYHSKLSDQTKSISSLSSQQAQERLQSYQDSLDFYKKLNTSLSVAIANSLRDKAVEELNAIALRIQENHGFIGVTFASLDGTMFTDIGTLDWNAKTLRRDWFVKTVELGTKHYTAFDIDKTTGQHVLTIATPVYVGNDIVGSVALDIAGDQIASPNGSGMFMMTDRNFNVFASDLTHSTLIGKDLTKEKPLFKNLVSGQYVTFSDADSHWFAVSQTEIDGENKLFTIIDIQQIVQTYKRDIQLIIAGFSGFSCVMLIGLYWVLSKELSGVRQIREWILALSDGQIKERRPIKFHNELDTIAQSLENLQFRLLDVVRNSHRTMNDLSIKQTDITYSIEGNTNNSQQELGLIEQVATATTQLSCTSFDVMQQAQSAELNAETAQKLIAESHDIIDSSSKQTEMVTLSIHESQQIINQLREFSDNISSVTDVINNISDQTNLLALNAAIEAARAGEQGRGFAVVADEVRSLAVKTQQSTIDIQGIILKLQEQSQLADQVMTRNVSLIHETQVANRALIASFNLISDKVLEISNINSIVSTAANEQKIVTEDVAKQMEDIRYLVQENLSAMERTKQANQNISDLTTNLNDALSFFKIELTS.

The region spanning 344 to 580 (TMNDLSIKQT…DVAKQMEDIR (237 aa)) is the Methyl-accepting transducer domain.

It belongs to the methyl-accepting chemotaxis (MCP) protein family.

The protein resides in the cell inner membrane. May function as an environmental regulator of TCP biogenesis. Negatively regulates the synthesis of the major pilin subunit of TCP (TcpA). This chain is Toxin coregulated pilus biosynthesis protein I (tcpI), found in Vibrio cholerae serotype O1 (strain ATCC 39315 / El Tor Inaba N16961).